A 257-amino-acid polypeptide reads, in one-letter code: Acetylglutamate kinase (257 aa).

Residues 43–44, R65, and N157 each bind substrate; that span reads GG.

Belongs to the acetylglutamate kinase family. ArgB subfamily.

The protein resides in the cytoplasm. It carries out the reaction N-acetyl-L-glutamate + ATP = N-acetyl-L-glutamyl 5-phosphate + ADP. It functions in the pathway amino-acid biosynthesis; L-arginine biosynthesis; N(2)-acetyl-L-ornithine from L-glutamate: step 2/4. In terms of biological role, catalyzes the ATP-dependent phosphorylation of N-acetyl-L-glutamate. The polypeptide is Acetylglutamate kinase (Pasteurella multocida (strain Pm70)).